The following is a 323-amino-acid chain: Protein translocase subunit SecF (323 aa).

The next 6 membrane-spanning stretches (helical) occupy residues 19-39 (GVIV…FKGF), 138-158 (ILSL…RYEW), 162-182 (LASV…VIVF), 189-209 (EVIA…IIIF), 244-264 (LTVF…IIGF), and 269-289 (LIGT…VALL).

This sequence belongs to the SecD/SecF family. SecF subfamily. In terms of assembly, forms a complex with SecD. Part of the essential Sec protein translocation apparatus which comprises SecA, SecYEG and auxiliary proteins SecDF-YajC and YidC.

Its subcellular location is the cell inner membrane. Functionally, part of the Sec protein translocase complex. Interacts with the SecYEG preprotein conducting channel. SecDF uses the proton motive force (PMF) to complete protein translocation after the ATP-dependent function of SecA. This Helicobacter pylori (strain ATCC 700392 / 26695) (Campylobacter pylori) protein is Protein translocase subunit SecF.